We begin with the raw amino-acid sequence, 238 residues long: MIQQYRDSNQVIWFDEELIEDPSQPIFDAEYWQSTNKVTGSASGRGTTWFVQLDTMQAALRHYRRGGLFGKLVKDNYLFSGWEQTRCAQEFQLLLTLINAGVHVPRPIAARAVKSGLTYQADLLSERIPNARDLVSILQEKPLPEGMYQKIGQEIAKMHNAGVNHTDLNIHNILIDDKDKVWIIDFDKCRKQEHGDWKKQNLERLLRSFKKELLKRQIHWKERDFAVLTEALSCLDIK.

Residue Asp167 is part of the active site.

This sequence belongs to the protein kinase superfamily. KdkA/RfaP family.

It localises to the cell inner membrane. The enzyme catalyses an alpha-Kdo-(2-&gt;6)-lipid IVA + ATP = a 4-O-phospho-alpha-Kdo-(2-&gt;6)-lipid IVA + ADP + H(+). The protein operates within bacterial outer membrane biogenesis; LPS core biosynthesis. In terms of biological role, catalyzes the ATP-dependent phosphorylation of the 3-deoxy-D-manno-octulosonic acid (Kdo) residue in Kdo-lipid IV(A) at the 4-OH position. In Vibrio parahaemolyticus serotype O3:K6 (strain RIMD 2210633), this protein is 3-deoxy-D-manno-octulosonic acid kinase.